A 444-amino-acid chain; its full sequence is Glutamate-1-semialdehyde 2,1-aminomutase (444 aa).

An N6-(pyridoxal phosphate)lysine modification is found at K278.

It belongs to the class-III pyridoxal-phosphate-dependent aminotransferase family. HemL subfamily. Homodimer. Requires pyridoxal 5'-phosphate as cofactor.

It localises to the cytoplasm. It catalyses the reaction (S)-4-amino-5-oxopentanoate = 5-aminolevulinate. It participates in porphyrin-containing compound metabolism; protoporphyrin-IX biosynthesis; 5-aminolevulinate from L-glutamyl-tRNA(Glu): step 2/2. The polypeptide is Glutamate-1-semialdehyde 2,1-aminomutase (Deinococcus radiodurans (strain ATCC 13939 / DSM 20539 / JCM 16871 / CCUG 27074 / LMG 4051 / NBRC 15346 / NCIMB 9279 / VKM B-1422 / R1)).